A 118-amino-acid polypeptide reads, in one-letter code: Putative cytochrome P450 family member 4F30 (118 aa).

Residues 1-64 are disordered; sequence MVTPAGCLGG…GPLHILGTDG (64 aa). The span at 28-43 shows a compositional bias: polar residues; it reads RAGQTGQAVSGAQVSS.

The chain is Putative cytochrome P450 family member 4F30 (CYP4F30P) from Homo sapiens (Human).